A 566-amino-acid chain; its full sequence is Oxygen-dependent choline dehydrogenase (566 aa).

7 to 36 (DYIICGAGSAGNVLATRLTEDPNVTVLLLE) is an FAD binding site. The tract at residues 180–203 (NGYQQEGFGPMDRTVTPKGRRAST) is disordered. Residue His474 is the Proton acceptor of the active site.

Belongs to the GMC oxidoreductase family. Requires FAD as cofactor.

The catalysed reaction is choline + A = betaine aldehyde + AH2. The enzyme catalyses betaine aldehyde + NAD(+) + H2O = glycine betaine + NADH + 2 H(+). It participates in amine and polyamine biosynthesis; betaine biosynthesis via choline pathway; betaine aldehyde from choline (cytochrome c reductase route): step 1/1. Involved in the biosynthesis of the osmoprotectant glycine betaine. Catalyzes the oxidation of choline to betaine aldehyde and betaine aldehyde to glycine betaine at the same rate. This is Oxygen-dependent choline dehydrogenase from Burkholderia ambifaria (strain MC40-6).